Consider the following 509-residue polypeptide: Phosphoenolpyruvate carboxylase (509 aa).

It belongs to the PEPCase type 2 family. In terms of assembly, homotetramer. Requires Mg(2+) as cofactor.

The enzyme catalyses oxaloacetate + phosphate = phosphoenolpyruvate + hydrogencarbonate. Its function is as follows. Catalyzes the irreversible beta-carboxylation of phosphoenolpyruvate (PEP) to form oxaloacetate (OAA), a four-carbon dicarboxylic acid source for the tricarboxylic acid cycle. The polypeptide is Phosphoenolpyruvate carboxylase (Metallosphaera sedula (strain ATCC 51363 / DSM 5348 / JCM 9185 / NBRC 15509 / TH2)).